Reading from the N-terminus, the 341-residue chain is Glyceraldehyde-3-phosphate dehydrogenase 2 (341 aa).

NAD(+)-binding positions include 12–13 (RI), Arg78, and Thr120. D-glyceraldehyde 3-phosphate contacts are provided by residues 152–154 (SCT) and Thr183. The Nucleophile role is filled by Cys153. Asn184 lines the NAD(+) pocket. D-glyceraldehyde 3-phosphate contacts are provided by residues Arg198, 211 to 212 (TG), and Arg234. Asn313 provides a ligand contact to NAD(+).

Belongs to the glyceraldehyde-3-phosphate dehydrogenase family. Homotetramer.

It localises to the cytoplasm. It catalyses the reaction D-glyceraldehyde 3-phosphate + phosphate + NAD(+) = (2R)-3-phospho-glyceroyl phosphate + NADH + H(+). It functions in the pathway carbohydrate degradation; glycolysis; pyruvate from D-glyceraldehyde 3-phosphate: step 1/5. Functionally, catalyzes the oxidative phosphorylation of glyceraldehyde 3-phosphate (G3P) to 1,3-bisphosphoglycerate (BPG) using the cofactor NAD. The first reaction step involves the formation of a hemiacetal intermediate between G3P and a cysteine residue, and this hemiacetal intermediate is then oxidized to a thioester, with concomitant reduction of NAD to NADH. The reduced NADH is then exchanged with the second NAD, and the thioester is attacked by a nucleophilic inorganic phosphate to produce BPG. The protein is Glyceraldehyde-3-phosphate dehydrogenase 2 (gapA2) of Staphylococcus epidermidis (strain ATCC 12228 / FDA PCI 1200).